The primary structure comprises 658 residues: Methionine--tRNA ligase (658 aa).

The 'HIGH' region signature appears at 9–19 (PYANGKAHVGH). Cys140, Cys143, Cys152, and Cys156 together coordinate Zn(2+). The 'KMSKS' region signature appears at 322–326 (TFSKS). Lys325 serves as a coordination point for ATP. A tRNA-binding domain is found at 558–658 (DFQKLDIRIG…KEVEPGTRVC (101 aa)).

Belongs to the class-I aminoacyl-tRNA synthetase family. MetG type 1 subfamily. Homodimer. The cofactor is Zn(2+).

Its subcellular location is the cytoplasm. It carries out the reaction tRNA(Met) + L-methionine + ATP = L-methionyl-tRNA(Met) + AMP + diphosphate. Is required not only for elongation of protein synthesis but also for the initiation of all mRNA translation through initiator tRNA(fMet) aminoacylation. The protein is Methionine--tRNA ligase of Archaeoglobus fulgidus (strain ATCC 49558 / DSM 4304 / JCM 9628 / NBRC 100126 / VC-16).